The following is a 987-amino-acid chain: Ephrin type-B receptor 4 (987 aa).

The signal sequence occupies residues 1 to 15; sequence MELRVLLCWASLAAA. The Extracellular segment spans residues 16 to 539; that stretch reads LEETLLNTKL…ESEGWREQLA (524 aa). The Eph LBD domain maps to 17-202; the sequence is EETLLNTKLE…FYKKCAQLTV (186 aa). 2 disulfides stabilise this stretch: Cys61/Cys184 and Cys97/Cys107. N-linked (GlcNAc...) asparagine glycans are attached at residues Asn203, Asn335, and Asn426. 2 Fibronectin type-III domains span residues 323-432 and 436-529; these read PPSA…TDRE and AVSD…TQLD. A helical membrane pass occupies residues 540-560; it reads LIAGTAVVGVVLVLVVIVVAV. The Cytoplasmic segment spans residues 561-987; the sequence is LCLRKQSNGR…GGTGGPAPQY (427 aa). One can recognise a Protein kinase domain in the interval 615-899; that stretch reads VKIEEVIGAG…ENGGASHPLL (285 aa). ATP-binding positions include 621–629 and Lys647; that span reads IGAGEFGEV. The active-site Proton acceptor is the Asp740. Ser769, Ser770, Ser911, and Ser943 each carry phosphoserine. The SAM domain occupies 907-971; that stretch reads SAFGSVGEWL…LASVQHMKSQ (65 aa). The disordered stretch occupies residues 965–987; the sequence is VQHMKSQAKPGTPGGTGGPAPQY. The residue at position 976 (Thr976) is a Phosphothreonine. Over residues 976-987 the composition is skewed to gly residues; the sequence is TPGGTGGPAPQY. Residues 985-987 carry the PDZ-binding motif; that stretch reads PQY. Phosphotyrosine is present on Tyr987.

This sequence belongs to the protein kinase superfamily. Tyr protein kinase family. Ephrin receptor subfamily. Heterotetramer upon binding of the ligand. The heterotetramer is composed of an ephrin dimer and a receptor dimer. Oligomerization is probably required to induce biological responses. Interacts with RASA1; the interaction depends on EPHB4 tyrosine-phosphorylation. Phosphorylated; autophosphorylation is stimulated by EFNB2. As to expression, abundantly expressed in placenta but also detected in kidney, liver, lung, pancreas, skeletal muscle and heart. Expressed in primitive and myeloid, but not lymphoid, hematopoietic cells. Also observed in cell lines derived from liver, breast, colon, lung, melanocyte and cervix.

It is found in the cell membrane. The enzyme catalyses L-tyrosyl-[protein] + ATP = O-phospho-L-tyrosyl-[protein] + ADP + H(+). Receptor tyrosine kinase which binds promiscuously transmembrane ephrin-B family ligands residing on adjacent cells, leading to contact-dependent bidirectional signaling into neighboring cells. The signaling pathway downstream of the receptor is referred to as forward signaling while the signaling pathway downstream of the ephrin ligand is referred to as reverse signaling. Together with its cognate ligand/functional ligand EFNB2 it is involved in the regulation of cell adhesion and migration, and plays a central role in heart morphogenesis, angiogenesis and blood vessel remodeling and permeability. EPHB4-mediated forward signaling controls cellular repulsion and segregation from EFNB2-expressing cells. The chain is Ephrin type-B receptor 4 (EPHB4) from Homo sapiens (Human).